Reading from the N-terminus, the 174-residue chain is Large ribosomal subunit protein uL10 (174 aa).

Belongs to the universal ribosomal protein uL10 family. In terms of assembly, part of the ribosomal stalk of the 50S ribosomal subunit. The N-terminus interacts with L11 and the large rRNA to form the base of the stalk. The C-terminus forms an elongated spine to which L12 dimers bind in a sequential fashion forming a multimeric L10(L12)X complex.

Its function is as follows. Forms part of the ribosomal stalk, playing a central role in the interaction of the ribosome with GTP-bound translation factors. The protein is Large ribosomal subunit protein uL10 of Rubrobacter xylanophilus (strain DSM 9941 / JCM 11954 / NBRC 16129 / PRD-1).